Here is a 434-residue protein sequence, read N- to C-terminus: Enolase (434 aa).

Ala-41 lines the phosphoenolpyruvate pocket. Gln-165 lines the (2R)-2-phosphoglycerate pocket. The active-site Proton donor is Glu-207. 3 residues coordinate Mg(2+): Asp-244, Glu-291, and Asp-318. Residues Lys-343, Arg-372, Ser-373, and Lys-394 each contribute to the phosphoenolpyruvate site. The (2R)-2-phosphoglycerate site is built by Lys-343, Arg-372, Ser-373, and Lys-394. The active-site Proton acceptor is Lys-343.

Belongs to the enolase family. Homodimer and homooctamer; the homodimer is inactive. Requires Mg(2+) as cofactor.

Its subcellular location is the cytoplasm. It is found in the secreted. It localises to the cell surface. The catalysed reaction is (2R)-2-phosphoglycerate = phosphoenolpyruvate + H2O. The protein operates within carbohydrate degradation; glycolysis; pyruvate from D-glyceraldehyde 3-phosphate: step 4/5. Functionally, catalyzes the reversible conversion of 2-phosphoglycerate (2-PG) into phosphoenolpyruvate (PEP). It is essential for the degradation of carbohydrates via glycolysis. In terms of biological role, 'Moonlights' as a laminin receptor. Binds laminin when expressed on the bacterial cell surface; this probably induces destruction of the extracellular matrix, favoring invasion and dissemination. The polypeptide is Enolase (Staphylococcus aureus).